Here is a 273-residue protein sequence, read N- to C-terminus: Probable NAD(P)H dehydrogenase (quinone) FQR1-like 2 (273 aa).

Residues 1 to 60 are disordered; the sequence is MGKGGGCVPSKKKKPATTGDGPGIDDDNDATNAPIQIDDDQTTIDGDRTTATNTGGTTTP. A compositionally biased stretch (low complexity) spans 49-60; the sequence is TTATNTGGTTTP. Positions 75–263 constitute a Flavodoxin-like domain; it reads IFVVFYSMYG…ALAEHQGNYM (189 aa). Residues 81–85, 183–236, and histidine 207 contribute to the FMN site; these read SMYGH and FFVS…SPYG. An NAD(+)-binding site is contributed by tyrosine 83.

It belongs to the WrbA family. FMN serves as cofactor.

It localises to the cell membrane. It carries out the reaction a quinone + NADH + H(+) = a quinol + NAD(+). The catalysed reaction is a quinone + NADPH + H(+) = a quinol + NADP(+). Functionally, catalyzes the transfer of electrons from NADH and NADPH to reduce quinone to the hydroquinone state. This chain is Probable NAD(P)H dehydrogenase (quinone) FQR1-like 2, found in Arabidopsis thaliana (Mouse-ear cress).